Here is an 878-residue protein sequence, read N- to C-terminus: Phosphoenolpyruvate carboxylase (878 aa).

Active-site residues include His-140 and Lys-545.

This sequence belongs to the PEPCase type 1 family. Mg(2+) serves as cofactor.

It carries out the reaction oxaloacetate + phosphate = phosphoenolpyruvate + hydrogencarbonate. Its function is as follows. Forms oxaloacetate, a four-carbon dicarboxylic acid source for the tricarboxylic acid cycle. This is Phosphoenolpyruvate carboxylase from Pseudomonas syringae pv. tomato (strain ATCC BAA-871 / DC3000).